Reading from the N-terminus, the 118-residue chain is MVRKYETVVIVQPDLGDDELKGLNAKVTDIIATMKGDLHRLEDWGVRKLAYPINKSARGRYYYVRFDGDAALIAELERRLRLDDKVLRYQSVKIEKETAAPAAKVAPVETAPAAEAAE.

A disordered region spans residues 98–118; that stretch reads TAAPAAKVAPVETAPAAEAAE. The span at 99-118 shows a compositional bias: low complexity; sequence AAPAAKVAPVETAPAAEAAE.

This sequence belongs to the bacterial ribosomal protein bS6 family.

In terms of biological role, binds together with bS18 to 16S ribosomal RNA. The sequence is that of Small ribosomal subunit protein bS6 from Geobacter metallireducens (strain ATCC 53774 / DSM 7210 / GS-15).